The sequence spans 291 residues: Pantothenate synthetase (291 aa).

33–40 (MGALHEGH) contributes to the ATP binding site. Catalysis depends on His-40, which acts as the Proton donor. Gln-64 lines the (R)-pantoate pocket. Beta-alanine is bound at residue Gln-64. An ATP-binding site is contributed by 157 to 160 (GEKD). A (R)-pantoate-binding site is contributed by Gln-163. ATP-binding positions include Val-186 and 194 to 197 (LSSR).

Belongs to the pantothenate synthetase family. Homodimer.

Its subcellular location is the cytoplasm. The catalysed reaction is (R)-pantoate + beta-alanine + ATP = (R)-pantothenate + AMP + diphosphate + H(+). It participates in cofactor biosynthesis; (R)-pantothenate biosynthesis; (R)-pantothenate from (R)-pantoate and beta-alanine: step 1/1. In terms of biological role, catalyzes the condensation of pantoate with beta-alanine in an ATP-dependent reaction via a pantoyl-adenylate intermediate. This chain is Pantothenate synthetase, found in Rubrobacter xylanophilus (strain DSM 9941 / JCM 11954 / NBRC 16129 / PRD-1).